We begin with the raw amino-acid sequence, 247 residues long: Probable transcriptional regulatory protein EUBELI_00902 (247 aa).

The protein belongs to the TACO1 family.

The protein resides in the cytoplasm. This is Probable transcriptional regulatory protein EUBELI_00902 from Lachnospira eligens (strain ATCC 27750 / DSM 3376 / VPI C15-48 / C15-B4) (Eubacterium eligens).